The primary structure comprises 344 residues: Sorting nexin-16 (344 aa).

Residues 1 to 10 (MATPYVPVPM) are compositionally biased toward pro residues. Residues 1–72 (MATPYVPVPM…SASSMCGSPL (72 aa)) are disordered. Residues 14–26 (NSASSFTNNRNQR) show a composition bias toward polar residues. Over residues 27–40 (SSSFGSVSTSSTSS) the composition is skewed to low complexity. Residues 52–68 (LKQTNVQDQMDSASSMC) are compositionally biased toward polar residues. The region spanning 105 to 218 (DRPSTPTILG…EFLCLDDPPG (114 aa)) is the PX domain. 3 residues coordinate a 1,2-diacyl-sn-glycero-3-phospho-(1D-myo-inositol-3-phosphate): R144, T146, and R184. S222 bears the Phosphoserine mark. The stretch at 223-278 (LEESRAFCETLEETNYHLQRELLEKQKEVESLKKLLGEKQLHIDALETRIRTLSLE) forms a coiled coil.

This sequence belongs to the sorting nexin family. As to quaternary structure, homooligomer. Interacts with EGFR.

It localises to the early endosome membrane. The protein localises to the late endosome membrane. It is found in the cytoplasm. Its subcellular location is the lysosome. Functionally, may be involved in several stages of intracellular trafficking. Plays a role in protein transport from early to late endosomes. Plays a role in protein transport to the lysosome. Promotes degradation of EGFR after EGF signaling. The sequence is that of Sorting nexin-16 (Snx16) from Mus musculus (Mouse).